A 296-amino-acid chain; its full sequence is Zinc finger CCCH-type antiviral protein 1-like (296 aa).

Ala2 carries the post-translational modification N-acetylalanine. 2 consecutive C3H1-type zinc fingers follow at residues 111–136 (LCRR…HDIH) and 198–219 (VCKS…HQLI).

The sequence is that of Zinc finger CCCH-type antiviral protein 1-like (Zc3hav1l) from Mus musculus (Mouse).